We begin with the raw amino-acid sequence, 465 residues long: Gamma-aminobutyric acid receptor subunit gamma-1 (465 aa).

The N-terminal stretch at 1-35 (MGPLKAFLFSPFLLRSQSRGVRLVFLLLTLHLGNC) is a signal peptide. The Extracellular segment spans residues 36-273 (VDKADDEDDE…FDLSRRMGYF (238 aa)). 2 N-linked (GlcNAc...) asparagine glycosylation sites follow: N50 and N127. C188 and C202 are joined by a disulfide. N245 carries an N-linked (GlcNAc...) asparagine glycan. Residues 274-294 (TIQTYIPCILTVVLSWVSFWI) form a helical membrane-spanning segment. The Cytoplasmic portion of the chain corresponds to 295 to 300 (NKDAVP). The helical transmembrane segment at 301–320 (ARTSLGITTVLTMTTLSTIA) threads the bilayer. Residues 321 to 328 (RKSLPKVS) lie on the Extracellular side of the membrane. Residues 329–349 (YVTAMDLFVSVCFIFVFAALM) form a helical membrane-spanning segment. The Cytoplasmic segment spans residues 350 to 444 (EYGTLHYFTS…RIAKIDSYSR (95 aa)). Residues 445-465 (IFFPTAFALFNLVYWVGYLYL) form a helical membrane-spanning segment.

This sequence belongs to the ligand-gated ion channel (TC 1.A.9) family. Gamma-aminobutyric acid receptor (TC 1.A.9.5) subfamily. GABRG1 sub-subfamily. As to quaternary structure, heteropentamer, formed by a combination of alpha (GABRA1-6), beta (GABRB1-3), gamma (GABRG1-3), delta (GABRD), epsilon (GABRE), rho (GABRR1-3), pi (GABRP) and theta (GABRQ) chains, each subunit exhibiting distinct physiological and pharmacological properties. In terms of processing, may be palmitoylated.

It localises to the postsynaptic cell membrane. It is found in the cell membrane. The catalysed reaction is chloride(in) = chloride(out). In terms of biological role, gamma subunit of the heteropentameric ligand-gated chloride channel gated by gamma-aminobutyric acid (GABA), a major inhibitory neurotransmitter in the brain. GABA-gated chloride channels, also named GABA(A) receptors (GABAAR), consist of five subunits arranged around a central pore and contain GABA active binding site(s) located at the alpha and beta subunit interface(s). When activated by GABA, GABAARs selectively allow the flow of chloride anions across the cell membrane down their electrochemical gradient. Chloride influx into the postsynaptic neuron following GABAAR opening decreases the neuron ability to generate a new action potential, thereby reducing nerve transmission. In Homo sapiens (Human), this protein is Gamma-aminobutyric acid receptor subunit gamma-1.